The following is a 439-amino-acid chain: Probable serine/threonine-protein kinase WNK6 (439 aa).

Residues Met1 to Pro30 are disordered. The segment covering Asp10 to Glu27 has biased composition (acidic residues). One can recognise a Protein kinase domain in the interval Leu35–Leu293. ATP is bound by residues Thr116–Phe119 and Lys166. Asp183 (proton acceptor) is an active-site residue.

The protein belongs to the protein kinase superfamily. Ser/Thr protein kinase family. WNK subfamily.

The catalysed reaction is L-seryl-[protein] + ATP = O-phospho-L-seryl-[protein] + ADP + H(+). It carries out the reaction L-threonyl-[protein] + ATP = O-phospho-L-threonyl-[protein] + ADP + H(+). This Oryza sativa subsp. japonica (Rice) protein is Probable serine/threonine-protein kinase WNK6 (WNK6).